The sequence spans 65 residues: Dybowskin-2CDYa (65 aa).

An N-terminal signal peptide occupies residues 1 to 22 (MFTLKKSLLLLFFIGVIKLSLC). Positions 23–47 (EEERNADDDERRDDPDEMDVEVENR) are excised as a propeptide. Acidic residues predominate over residues 26–43 (RNADDDERRDDPDEMDVE). The interval 26-65 (RNADDDERRDDPDEMDVEVENRSAVGRHGRRFGLRKHRKH) is disordered. Residues 50-65 (VGRHGRRFGLRKHRKH) are compositionally biased toward basic residues.

The protein belongs to the frog skin active peptide (FSAP) family. Brevinin subfamily. Expressed by the skin glands.

It localises to the secreted. Antimicrobial peptide. Has activity against the Gram-positive bacterium S.aureus (MIC=6 uM) and the Gram-negative bacterium E.coli (MIC=3 uM). Lacks hemolytic activity against human erythrocytes. This chain is Dybowskin-2CDYa, found in Rana dybowskii (Dybovsky's frog).